Here is a 371-residue protein sequence, read N- to C-terminus: Putative RNA-binding protein Luc7-like 1 (371 aa).

2 coiled-coil regions span residues 87 to 177 (MDHL…RNSM) and 218 to 259 (FIQI…LSRR). A compositionally biased stretch (basic and acidic residues) spans 232-257 (VAEKQEKRNQDRLRRREEREREERLS). Residues 232-371 (VAEKQEKRNQ…RSEEKEAGEI (140 aa)) form a disordered region. Positions 258-317 (RRSGSRTRDRRRSRSRDRRRRRSRSTSRERRKLSRSRSRDRHRRHRSRSRSHSRGHRRAS) are enriched in basic residues. Basic and acidic residues-rich tracts occupy residues 318–351 (RDRS…DWRL) and 361–371 (RRSEEKEAGEI). Phosphoserine is present on residues Ser-332, Ser-336, and Ser-363.

This sequence belongs to the Luc7 family. As to expression, ubiquitous.

Its function is as follows. May bind to RNA via its Arg/Ser-rich domain. The chain is Putative RNA-binding protein Luc7-like 1 (LUC7L) from Homo sapiens (Human).